We begin with the raw amino-acid sequence, 864 residues long: Leucine--tRNA ligase (864 aa).

The 'HIGH' region motif lies at 42–52 (PYPSGKLHMGH). A 'KMSKS' region motif is present at residues 624–628 (KMSKS). An ATP-binding site is contributed by Lys-627.

The protein belongs to the class-I aminoacyl-tRNA synthetase family.

It localises to the cytoplasm. It catalyses the reaction tRNA(Leu) + L-leucine + ATP = L-leucyl-tRNA(Leu) + AMP + diphosphate. This chain is Leucine--tRNA ligase, found in Burkholderia multivorans (strain ATCC 17616 / 249).